We begin with the raw amino-acid sequence, 232 residues long: UPF0758 protein Clos_1766 (232 aa).

The MPN domain maps to 110–232; sequence KIKGPDDVSN…YFSMKEHKLI (123 aa). Residues His-181, His-183, and Asp-194 each contribute to the Zn(2+) site. The JAMM motif signature appears at 181-194; that stretch reads HNHPSGDPNPSGED.

Belongs to the UPF0758 family.

The protein is UPF0758 protein Clos_1766 of Alkaliphilus oremlandii (strain OhILAs) (Clostridium oremlandii (strain OhILAs)).